We begin with the raw amino-acid sequence, 158 residues long: 6,7-dimethyl-8-ribityllumazine synthase (158 aa).

5-amino-6-(D-ribitylamino)uracil is bound by residues Phe-24, 58–60 (AFE), and 82–84 (AVI). 87 to 88 (GT) lines the (2S)-2-hydroxy-3-oxobutyl phosphate pocket. The active-site Proton donor is His-90. 5-amino-6-(D-ribitylamino)uracil is bound at residue Phe-115. Arg-129 serves as a coordination point for (2S)-2-hydroxy-3-oxobutyl phosphate.

Belongs to the DMRL synthase family. Forms an icosahedral capsid composed of 60 subunits, arranged as a dodecamer of pentamers.

The enzyme catalyses (2S)-2-hydroxy-3-oxobutyl phosphate + 5-amino-6-(D-ribitylamino)uracil = 6,7-dimethyl-8-(1-D-ribityl)lumazine + phosphate + 2 H2O + H(+). The protein operates within cofactor biosynthesis; riboflavin biosynthesis; riboflavin from 2-hydroxy-3-oxobutyl phosphate and 5-amino-6-(D-ribitylamino)uracil: step 1/2. Its function is as follows. Catalyzes the formation of 6,7-dimethyl-8-ribityllumazine by condensation of 5-amino-6-(D-ribitylamino)uracil with 3,4-dihydroxy-2-butanone 4-phosphate. This is the penultimate step in the biosynthesis of riboflavin. The protein is 6,7-dimethyl-8-ribityllumazine synthase of Azotobacter vinelandii (strain DJ / ATCC BAA-1303).